The chain runs to 917 residues: Protein translocase subunit SecA (917 aa).

ATP contacts are provided by residues Gln-87, 105–109 (GEGKT), and Asp-516. The Zn(2+) site is built by Cys-901, Cys-903, Cys-912, and His-913.

Belongs to the SecA family. Monomer and homodimer. Part of the essential Sec protein translocation apparatus which comprises SecA, SecYEG and auxiliary proteins SecDF-YajC and YidC. It depends on Zn(2+) as a cofactor.

The protein resides in the cell inner membrane. The protein localises to the cytoplasm. The enzyme catalyses ATP + H2O + cellular proteinSide 1 = ADP + phosphate + cellular proteinSide 2.. Part of the Sec protein translocase complex. Interacts with the SecYEG preprotein conducting channel. Has a central role in coupling the hydrolysis of ATP to the transfer of proteins into and across the cell membrane, serving both as a receptor for the preprotein-SecB complex and as an ATP-driven molecular motor driving the stepwise translocation of polypeptide chains across the membrane. The sequence is that of Protein translocase subunit SecA from Acidovorax sp. (strain JS42).